Here is a 372-residue protein sequence, read N- to C-terminus: Putative KilA-N domain-containing protein L32 (372 aa).

Residues 1–12 show a composition bias toward basic residues; the sequence is MPHKAPKSKLFR. The tract at residues 1–129 is disordered; that stretch reads MPHKAPKSKL…SDNDKSKDNF (129 aa). Basic and acidic residues predominate over residues 14 to 36; it reads RYVEDSDDETRGRSRNRSVEKSR. Residues 37–53 are compositionally biased toward basic residues; that stretch reads SKSLTRSKSKSPKKSRS. Residues 79 to 120 show a composition bias toward acidic residues; it reads EDSEDSEDSESDQDDDKSDNEQSDSELDDSESDDDETDDNES. Residues 151 to 255 enclose the KilA-N domain; the sequence is KFAIGKFGDF…IKIGEWIEEW (105 aa).

This chain is Putative KilA-N domain-containing protein L32, found in Acanthamoeba polyphaga (Amoeba).